The sequence spans 20 residues: Pommaclein (20 aa).

This sequence belongs to the GASA family. In terms of tissue distribution, expressed in pulp (aril) of fruits (at protein level).

This Punica granatum (Pomegranate) protein is Pommaclein.